The primary structure comprises 162 residues: uncharacterized protein (162 aa).

This is an uncharacterized protein from Rhodobacter capsulatus (Rhodopseudomonas capsulata).